A 170-amino-acid chain; its full sequence is Adenine phosphoribosyltransferase (170 aa).

It belongs to the purine/pyrimidine phosphoribosyltransferase family. Homodimer.

Its subcellular location is the cytoplasm. It catalyses the reaction AMP + diphosphate = 5-phospho-alpha-D-ribose 1-diphosphate + adenine. The protein operates within purine metabolism; AMP biosynthesis via salvage pathway; AMP from adenine: step 1/1. Functionally, catalyzes a salvage reaction resulting in the formation of AMP, that is energically less costly than de novo synthesis. The protein is Adenine phosphoribosyltransferase of Nitrosopumilus maritimus (strain SCM1).